We begin with the raw amino-acid sequence, 349 residues long: Small ribosomal subunit protein eS6 (349 aa).

A disordered region spans residues 224–349 (RRRSRLSSMR…AKKEKKQKKK (126 aa)). Basic and acidic residues-rich tracts occupy residues 231 to 251 (SMRDSRSSIGEERDKEKEKAA) and 260 to 334 (KKEA…EAAK).

This sequence belongs to the eukaryotic ribosomal protein eS6 family. Component of the small ribosomal subunit. Part of the small subunit (SSU) processome, composed of more than 70 proteins and the RNA chaperone small nucleolar RNA (snoRNA) U3. In terms of processing, ribosomal protein S6 is the major substrate of protein kinases in eukaryote ribosomes.

Its subcellular location is the cytoplasm. It localises to the nucleus. The protein localises to the nucleolus. Component of the 40S small ribosomal subunit. Plays an important role in controlling cell growth and proliferation through the selective translation of particular classes of mRNA. Part of the small subunit (SSU) processome, first precursor of the small eukaryotic ribosomal subunit. During the assembly of the SSU processome in the nucleolus, many ribosome biogenesis factors, an RNA chaperone and ribosomal proteins associate with the nascent pre-rRNA and work in concert to generate RNA folding, modifications, rearrangements and cleavage as well as targeted degradation of pre-ribosomal RNA by the RNA exosome. This Aedes albopictus (Asian tiger mosquito) protein is Small ribosomal subunit protein eS6 (RpS6).